The primary structure comprises 147 residues: Protein-export protein SecB (147 aa).

Belongs to the SecB family. Homotetramer, a dimer of dimers. One homotetramer interacts with 1 SecA dimer.

Its subcellular location is the cytoplasm. Its function is as follows. One of the proteins required for the normal export of preproteins out of the cell cytoplasm. It is a molecular chaperone that binds to a subset of precursor proteins, maintaining them in a translocation-competent state. It also specifically binds to its receptor SecA. This Neisseria meningitidis serogroup B (strain ATCC BAA-335 / MC58) protein is Protein-export protein SecB.